The following is a 259-amino-acid chain: Protein unc-50 homolog (259 aa).

Methionine 1 is modified (N-acetylmethionine). The span at 1–17 (MLPSTSVNSPAQGNGVL) shows a compositional bias: polar residues. A disordered region spans residues 1 to 22 (MLPSTSVNSPAQGNGVLSSRDA). Residues 1–82 (MLPSTSVNSP…TKDQWARDDP (82 aa)) lie on the Cytoplasmic side of the membrane. Phosphoserine is present on serine 6. A helical membrane pass occupies residues 83–103 (AFLVLLSIWLCVSTIGFGFVL). At 104–115 (DMGFFETIKLLL) the chain is on the lumenal side. A helical membrane pass occupies residues 116 to 136 (WVVFIDCVGVGLLISTLMWFI). Residues 137–163 (SNKYLVKRQSRDYDVEWGYAFDVHLNA) lie on the Cytoplasmic side of the membrane. The chain crosses the membrane as a helical span at residues 164–184 (FYPLLVILHFIQLFFINHVIL). At 185–187 (TDT) the chain is on the lumenal side. Residues 188-208 (FIGYLVGNTLWLVAVGYYIYV) form a helical membrane-spanning segment. Over 209-222 (TFLGYSALPFLKNT) the chain is Cytoplasmic. The helical transmembrane segment at 223-243 (VILLYPFAPLILLYGLSLALG) threads the bilayer. Residues 244–259 (WNFTHTLCSFYKYRVK) are Lumenal-facing.

Belongs to the unc-50 family.

It is found in the nucleus inner membrane. It localises to the golgi apparatus membrane. In terms of biological role, involved in the cell surface expression of neuronal nicotinic receptors. Binds RNA. The protein is Protein unc-50 homolog (UNC50) of Bos taurus (Bovine).